Reading from the N-terminus, the 436-residue chain is Tol-Pal system protein TolB (436 aa).

The N-terminal stretch at 1–28 (MEMLRRNFFRLLMVLVAGCGLIASPANA) is a signal peptide.

This sequence belongs to the TolB family. In terms of assembly, the Tol-Pal system is composed of five core proteins: the inner membrane proteins TolA, TolQ and TolR, the periplasmic protein TolB and the outer membrane protein Pal. They form a network linking the inner and outer membranes and the peptidoglycan layer.

Its subcellular location is the periplasm. Part of the Tol-Pal system, which plays a role in outer membrane invagination during cell division and is important for maintaining outer membrane integrity. This is Tol-Pal system protein TolB from Rhizobium meliloti (strain 1021) (Ensifer meliloti).